We begin with the raw amino-acid sequence, 791 residues long: Protein FAM47A (791 aa).

3 disordered regions span residues 195-257 (PVSH…TRRR), 274-409 (EDAR…TGVC), and 449-573 (VKKT…SEPP). Composition is skewed to basic and acidic residues over residues 274–288 (EDAR…KTTD) and 333–342 (GESHLRLEHS). The span at 349–358 (SLRSEPSETG) shows a compositional bias: polar residues. Positions 449 to 462 (VKKTKEPTEPHKSP) are enriched in basic and acidic residues.

This sequence belongs to the FAM47 family.

In Homo sapiens (Human), this protein is Protein FAM47A (FAM47A).